The primary structure comprises 400 residues: Phosphoglycerate kinase (400 aa).

Residues 21–23, R36, 59–62, R116, and R149 contribute to the substrate site; these read DLN and HLGR. Residues K200, E317, and 343 to 346 each bind ATP; that span reads GGDT.

This sequence belongs to the phosphoglycerate kinase family. As to quaternary structure, monomer.

It is found in the cytoplasm. The enzyme catalyses (2R)-3-phosphoglycerate + ATP = (2R)-3-phospho-glyceroyl phosphate + ADP. Its pathway is carbohydrate degradation; glycolysis; pyruvate from D-glyceraldehyde 3-phosphate: step 2/5. This Blochmanniella floridana protein is Phosphoglycerate kinase.